A 542-amino-acid polypeptide reads, in one-letter code: Chaperonin GroEL (542 aa).

ATP is bound by residues Thr29–Pro32, Asp86–Thr90, Gly413, Asn476–Ala478, and Asp492.

It belongs to the chaperonin (HSP60) family. As to quaternary structure, forms a cylinder of 14 subunits composed of two heptameric rings stacked back-to-back. Interacts with the co-chaperonin GroES.

It localises to the cytoplasm. It catalyses the reaction ATP + H2O + a folded polypeptide = ADP + phosphate + an unfolded polypeptide.. Functionally, together with its co-chaperonin GroES, plays an essential role in assisting protein folding. The GroEL-GroES system forms a nano-cage that allows encapsulation of the non-native substrate proteins and provides a physical environment optimized to promote and accelerate protein folding. This chain is Chaperonin GroEL, found in Lactococcus lactis subsp. cremoris (strain SK11).